The chain runs to 176 residues: Protein MAL2 (176 aa).

Residues 1–34 (MSAGGAPVPPPPNPAMSFPAPRVTLPAGPDILRT) lie on the Cytoplasmic side of the membrane. The MARVEL domain maps to 31 to 175 (ILRTYSGAFV…SLGLALRRWR (145 aa)). The helical transmembrane segment at 35–55 (YSGAFVCLEIVFGGLVWILVA) threads the bilayer. Topologically, residues 56–66 (SSNVPLPLLQG) are lumenal. A helical membrane pass occupies residues 67 to 87 (WVMFVSVTAFVCSLLFLGVFL). The Cytoplasmic segment spans residues 88–102 (SGVVTQINANWNFLD). A helical membrane pass occupies residues 103-123 (FAYHFTVFVFYFGAFLLEAAT). At 124–149 (TSLHDLRCNRTMTVQPLLSDNQYNIN) the chain is on the lumenal side. An N-linked (GlcNAc...) asparagine glycan is attached at asparagine 132. Residues 150–170 (VAATIFAFVTTACYGCSLGLA) traverse the membrane as a helical segment. The Cytoplasmic segment spans residues 171-176 (LRRWRP).

The protein belongs to the MAL family. In terms of assembly, interacts with TPD52L2.

It localises to the cell membrane. The protein localises to the apical cell membrane. Member of the machinery of polarized transport. Required for the indirect transcytotic route at the step of the egress of the transcytosing cargo from perinuclear endosomes in order for it to travel to the apical surface via a raft-dependent pathway. In Bos taurus (Bovine), this protein is Protein MAL2 (MAL2).